A 423-amino-acid chain; its full sequence is Glucose-6-phosphate isomerase (423 aa).

Glutamate 279 functions as the Proton donor in the catalytic mechanism. Catalysis depends on residues histidine 300 and lysine 413.

The protein belongs to the GPI family.

Its subcellular location is the cytoplasm. It carries out the reaction alpha-D-glucose 6-phosphate = beta-D-fructose 6-phosphate. The protein operates within carbohydrate biosynthesis; gluconeogenesis. Its pathway is carbohydrate degradation; glycolysis; D-glyceraldehyde 3-phosphate and glycerone phosphate from D-glucose: step 2/4. Functionally, catalyzes the reversible isomerization of glucose-6-phosphate to fructose-6-phosphate. The protein is Glucose-6-phosphate isomerase of Acholeplasma laidlawii (strain PG-8A).